We begin with the raw amino-acid sequence, 2194 residues long: PDZ and LIM domain protein Zasp (2194 aa).

The PDZ domain occupies Q8–G90. Residues T211 to T277 are disordered. The span at P228–Q253 shows a compositional bias: low complexity. Positions N280–N339 constitute an LIM zinc-binding 1 domain. A compositionally biased stretch (low complexity) spans A415–D435. 11 disordered regions span residues A415 to N436, V457 to F476, G511 to E558, S580 to P611, V623 to E692, A896 to S940, L1223 to Q1260, Q1297 to N1322, L1550 to E1632, Q1646 to T1738, and A1815 to Q1837. A compositionally biased stretch (low complexity) spans P515–P530. Polar residues-rich tracts occupy residues S580–T590 and V644–A667. A compositionally biased stretch (low complexity) spans S676–E692. Residues Q1598–G1610 are compositionally biased toward polar residues. 3 stretches are compositionally biased toward low complexity: residues S1616–Q1630, Q1646–Q1668, and S1699–S1727. LIM zinc-binding domains follow at residues P2018–A2078, P2079–T2138, and K2139–R2194.

In terms of assembly, interacts with alpha-actinin (Actn). Expression is first detected in the proctodeum and the midgut primordium. In stage 11 embryos, expression is predominant in the leading edge of epidermal cells adjacent to the amnioserosa. Stage 12 embryos exhibit expression in the midgut and the leading edge. Expressed in several rows of germ band cells next to the leading edge at stage 14. Strong expression is visible in the midgut and pharyngeal muscles of stage 17 embryos. Also expressed in somatic muscles and visceral mesoderm. Colocalizes with mys (beta PS integrin) in myotendinous junctions and with Actn in muscle Z lines.

The protein resides in the cytoplasm. Its subcellular location is the cytoskeleton. Its function is as follows. Regulator of cell matrix adhesion having two related functions, one upstream of Actn organizing the Z line and the other downstream of integrins regulating assembly of integrin adhesion sites. Also required for the formation of myotendinous junctions in muscles. The protein is PDZ and LIM domain protein Zasp (Zasp52) of Drosophila melanogaster (Fruit fly).